The chain runs to 284 residues: MTRPAEPARAAGRHRPRKRLGQHFLTDQRIIDAIVQAIAPQPGQPMVEIGPGLAALTQPLVERLGRLTVIELDRDLALRLRRHAHLQVIQADVLRVDFTALAQTLRATPPTPPTRLRVVGNLPYNISTPILFHLLAHGSAIEDQHFMLQKQVVERMVAKPGGSDYGRLSVMLQWRYAMEKLLHVPPASFAPPPRVDSAVVRMLPHAQPAAVSRPMLEELVQLAFSQRRKLLHHTLGRWLDAHQYAGRFDTRRRAEEVPVQEYLDLAREAHRWIADGKDPPCAGA.

Histidine 23, leucine 25, glycine 50, glutamate 71, aspartate 92, and asparagine 121 together coordinate S-adenosyl-L-methionine.

The protein belongs to the class I-like SAM-binding methyltransferase superfamily. rRNA adenine N(6)-methyltransferase family. RsmA subfamily.

The protein localises to the cytoplasm. It carries out the reaction adenosine(1518)/adenosine(1519) in 16S rRNA + 4 S-adenosyl-L-methionine = N(6)-dimethyladenosine(1518)/N(6)-dimethyladenosine(1519) in 16S rRNA + 4 S-adenosyl-L-homocysteine + 4 H(+). Its function is as follows. Specifically dimethylates two adjacent adenosines (A1518 and A1519) in the loop of a conserved hairpin near the 3'-end of 16S rRNA in the 30S particle. May play a critical role in biogenesis of 30S subunits. In Verminephrobacter eiseniae (strain EF01-2), this protein is Ribosomal RNA small subunit methyltransferase A.